The sequence spans 302 residues: RING-H2 finger protein ATL38 (302 aa).

The helical transmembrane segment at 15-35 threads the bilayer; sequence LLVITIILFAIFIVGLASVCF. Residues 96–138 form an RING-type; atypical zinc finger; the sequence is CAVCICEFEDHETLRLMPECCHVFHADCVSVWLSDHSTCPLCR. The tract at residues 279–302 is disordered; sequence GEAVAPSKDSRRISVEQSQLDDRV. The segment covering 286–302 has biased composition (basic and acidic residues); sequence KDSRRISVEQSQLDDRV.

This sequence belongs to the RING-type zinc finger family. ATL subfamily.

The protein localises to the membrane. The enzyme catalyses S-ubiquitinyl-[E2 ubiquitin-conjugating enzyme]-L-cysteine + [acceptor protein]-L-lysine = [E2 ubiquitin-conjugating enzyme]-L-cysteine + N(6)-ubiquitinyl-[acceptor protein]-L-lysine.. It functions in the pathway protein modification; protein ubiquitination. The chain is RING-H2 finger protein ATL38 (ATL38) from Arabidopsis thaliana (Mouse-ear cress).